A 725-amino-acid polypeptide reads, in one-letter code: Polyribonucleotide nucleotidyltransferase (725 aa).

Mg(2+)-binding residues include Asp487 and Asp493. One can recognise a KH domain in the interval 554–613; that stretch reads PRIETMQIPTDKIREVIGTGGKVIREIVEKTGAKIDIQDTGVIKIASSDAKAIKAAYNWI. Positions 623-691 constitute an S1 motif domain; that stretch reads GMIYDGTVVK…ERGKIRLSMK (69 aa). The segment at 697–725 is disordered; sequence TGEDITEKLKAEREADRNRERQARQSAGE. Residues 701-719 are compositionally biased toward basic and acidic residues; that stretch reads ITEKLKAEREADRNRERQA.

The protein belongs to the polyribonucleotide nucleotidyltransferase family. Mg(2+) serves as cofactor.

The protein resides in the cytoplasm. It catalyses the reaction RNA(n+1) + phosphate = RNA(n) + a ribonucleoside 5'-diphosphate. In terms of biological role, involved in mRNA degradation. Catalyzes the phosphorolysis of single-stranded polyribonucleotides processively in the 3'- to 5'-direction. This is Polyribonucleotide nucleotidyltransferase from Methylobacterium nodulans (strain LMG 21967 / CNCM I-2342 / ORS 2060).